The primary structure comprises 534 residues: Anther-specific proline-rich protein APG (534 aa).

A signal peptide spans 1–35 (MKRSSLVDSCSYSRIFRSIFCLLSFCIFFLTTTNA). Residues 59–196 (NPPTPDPSPK…SPKPAPSPPK (138 aa)) show a composition bias toward pro residues. A disordered region spans residues 59–202 (NPPTPDPSPK…SPPKPENKTI (144 aa)). The active-site Nucleophile is the S211. Residues D508 and H511 contribute to the active site.

Belongs to the 'GDSL' lipolytic enzyme family. In terms of tissue distribution, found in sporophytic and gametophytic cell types in the anther, only in male fertile plants.

This Arabidopsis thaliana (Mouse-ear cress) protein is Anther-specific proline-rich protein APG (APG).